Consider the following 309-residue polypeptide: 4-hydroxy-3-methylbut-2-enyl diphosphate reductase (309 aa).

C13 contacts [4Fe-4S] cluster. Residues H42 and H75 each coordinate (2E)-4-hydroxy-3-methylbut-2-enyl diphosphate. Dimethylallyl diphosphate is bound by residues H42 and H75. The isopentenyl diphosphate site is built by H42 and H75. C97 lines the [4Fe-4S] cluster pocket. H125 contacts (2E)-4-hydroxy-3-methylbut-2-enyl diphosphate. H125 provides a ligand contact to dimethylallyl diphosphate. H125 is a binding site for isopentenyl diphosphate. E127 functions as the Proton donor in the catalytic mechanism. T165 is a binding site for (2E)-4-hydroxy-3-methylbut-2-enyl diphosphate. Position 195 (C195) interacts with [4Fe-4S] cluster. (2E)-4-hydroxy-3-methylbut-2-enyl diphosphate-binding residues include S223, S224, N225, and S267. Dimethylallyl diphosphate is bound by residues S223, S224, N225, and S267. 4 residues coordinate isopentenyl diphosphate: S223, S224, N225, and S267.

This sequence belongs to the IspH family. The cofactor is [4Fe-4S] cluster.

The enzyme catalyses isopentenyl diphosphate + 2 oxidized [2Fe-2S]-[ferredoxin] + H2O = (2E)-4-hydroxy-3-methylbut-2-enyl diphosphate + 2 reduced [2Fe-2S]-[ferredoxin] + 2 H(+). The catalysed reaction is dimethylallyl diphosphate + 2 oxidized [2Fe-2S]-[ferredoxin] + H2O = (2E)-4-hydroxy-3-methylbut-2-enyl diphosphate + 2 reduced [2Fe-2S]-[ferredoxin] + 2 H(+). It functions in the pathway isoprenoid biosynthesis; dimethylallyl diphosphate biosynthesis; dimethylallyl diphosphate from (2E)-4-hydroxy-3-methylbutenyl diphosphate: step 1/1. Its pathway is isoprenoid biosynthesis; isopentenyl diphosphate biosynthesis via DXP pathway; isopentenyl diphosphate from 1-deoxy-D-xylulose 5-phosphate: step 6/6. Its function is as follows. Catalyzes the conversion of 1-hydroxy-2-methyl-2-(E)-butenyl 4-diphosphate (HMBPP) into a mixture of isopentenyl diphosphate (IPP) and dimethylallyl diphosphate (DMAPP). Acts in the terminal step of the DOXP/MEP pathway for isoprenoid precursor biosynthesis. This chain is 4-hydroxy-3-methylbut-2-enyl diphosphate reductase, found in Chlamydia caviae (strain ATCC VR-813 / DSM 19441 / 03DC25 / GPIC) (Chlamydophila caviae).